A 57-amino-acid chain; its full sequence is Somatostatin-2 (57 aa).

Positions Gly1–Arg26 are disordered.

It belongs to the somatostatin family.

The protein localises to the secreted. In terms of biological role, somatostatin inhibits the release of somatotropin. The sequence is that of Somatostatin-2 (sst2) from Piaractus mesopotamicus (Small-scaled pacu).